We begin with the raw amino-acid sequence, 293 residues long: Ankyrin repeat and SOCS box protein 11 (293 aa).

ANK repeat units lie at residues 36–65 (DDRTPLHDAALQGRLLPLRRLLSQGYNVGM), 69–98 (DGITALHEACVGGHFTCAKLLLEHGADANA), 102–131 (DGATPLFSACCSGNPALVSLILTHSSAHHP), 134–163 (LLCSPLHEAAKRGHTACVELLLSHGVNVDM), 167–196 (SVGTALYCACEVKSTDCVLTLLILGADVQC), 199–228 (GLDTPLHAACRVGGAKEAELLLEHGADRTS), and 232–259 (EGKTPLDLTSDQSIKHLLQTAGTCSLSQ). The region spanning 244–293 (SIKHLLQTAGTCSLSQLCRWCIRRSLGQKGLNKTKTLCLPHMLHNYLLYH) is the SOCS box domain.

This sequence belongs to the ankyrin SOCS box (ASB) family. Substrate-recognition component of the ECS(ASB11) complex, composed of asb11, cul5, elob, eloc and rnf7/rbx2. As to expression, expressed in the developing nervous system: localizes to neural plate margins and is abutting the proneuronal zone.

It is found in the endoplasmic reticulum. The protein operates within protein modification; protein ubiquitination. In terms of biological role, substrate-recognition component of a cullin-5-RING E3 ubiquitin-protein ligase complex (ECS complex, also named CRL5 complex), which mediates the ubiquitination and subsequent proteasomal degradation of target proteins. Acts as a regulator of the neuronal progenitor compartment size by maintaining the neural precursors in the proliferating undifferentiated state. The ECS(ASB11) complex acts as a positive regulator of Notch signaling pathway by mediating ubiquitination and degradation of DeltaA (dla). Also acts as a regulator of regenerative myogenesis. The sequence is that of Ankyrin repeat and SOCS box protein 11 from Danio rerio (Zebrafish).